Reading from the N-terminus, the 405-residue chain is 4-hydroxy-3-methylbut-2-enyl diphosphate reductase (405 aa).

Cysteine 66 is a binding site for [4Fe-4S] cluster. Residue histidine 96 coordinates (2E)-4-hydroxy-3-methylbut-2-enyl diphosphate. Histidine 96 lines the dimethylallyl diphosphate pocket. Residue histidine 96 coordinates isopentenyl diphosphate. Cysteine 157 is a binding site for [4Fe-4S] cluster. A (2E)-4-hydroxy-3-methylbut-2-enyl diphosphate-binding site is contributed by histidine 185. A dimethylallyl diphosphate-binding site is contributed by histidine 185. Position 185 (histidine 185) interacts with isopentenyl diphosphate. The active-site Proton donor is glutamate 187. Threonine 250 lines the (2E)-4-hydroxy-3-methylbut-2-enyl diphosphate pocket. Cysteine 288 is a [4Fe-4S] cluster binding site. (2E)-4-hydroxy-3-methylbut-2-enyl diphosphate is bound by residues serine 317, serine 318, asparagine 319, and serine 380. 4 residues coordinate dimethylallyl diphosphate: serine 317, serine 318, asparagine 319, and serine 380. The isopentenyl diphosphate site is built by serine 317, serine 318, asparagine 319, and serine 380.

The protein belongs to the IspH family. Requires [4Fe-4S] cluster as cofactor.

It carries out the reaction isopentenyl diphosphate + 2 oxidized [2Fe-2S]-[ferredoxin] + H2O = (2E)-4-hydroxy-3-methylbut-2-enyl diphosphate + 2 reduced [2Fe-2S]-[ferredoxin] + 2 H(+). The catalysed reaction is dimethylallyl diphosphate + 2 oxidized [2Fe-2S]-[ferredoxin] + H2O = (2E)-4-hydroxy-3-methylbut-2-enyl diphosphate + 2 reduced [2Fe-2S]-[ferredoxin] + 2 H(+). It functions in the pathway isoprenoid biosynthesis; dimethylallyl diphosphate biosynthesis; dimethylallyl diphosphate from (2E)-4-hydroxy-3-methylbutenyl diphosphate: step 1/1. It participates in isoprenoid biosynthesis; isopentenyl diphosphate biosynthesis via DXP pathway; isopentenyl diphosphate from 1-deoxy-D-xylulose 5-phosphate: step 6/6. Functionally, catalyzes the conversion of 1-hydroxy-2-methyl-2-(E)-butenyl 4-diphosphate (HMBPP) into a mixture of isopentenyl diphosphate (IPP) and dimethylallyl diphosphate (DMAPP). Acts in the terminal step of the DOXP/MEP pathway for isoprenoid precursor biosynthesis. This chain is 4-hydroxy-3-methylbut-2-enyl diphosphate reductase, found in Prochlorococcus marinus (strain SARG / CCMP1375 / SS120).